The primary structure comprises 229 residues: UPF0758 protein Cagg_0777 (229 aa).

Residues P105 to G227 form the MPN domain. The Zn(2+) site is built by H176, H178, and D189. The JAMM motif signature appears at H176–D189.

The protein belongs to the UPF0758 family.

In Chloroflexus aggregans (strain MD-66 / DSM 9485), this protein is UPF0758 protein Cagg_0777.